The sequence spans 71 residues: uncharacterized protein (71 aa).

2 consecutive transmembrane segments (helical) span residues 9-29 and 41-61; these read FVIF…NINF and FVAL…FFGL.

It is found in the membrane. This is an uncharacterized protein from Acheta domesticus (House cricket).